Reading from the N-terminus, the 399-residue chain is Centrosomal protein 43 (399 aa).

Positions 70 to 102 constitute a LisH domain; sequence DGRLVASLVAEFLQFFNLDFTLAVFQPETSTLQ. 2 disordered regions span residues 139–218 and 232–308; these read EKGP…SSLH and NRTL…SESK. The residue at position 143 (T143) is a Phosphothreonine. 3 positions are modified to phosphoserine: S152, S156, and S160. Polar residues predominate over residues 163-172; the sequence is GKTSAQTTPS. Residue T170 is modified to Phosphothreonine. Positions 175–186 are enriched in basic residues; the sequence is PRYKGQGKKKTS. S202 carries the post-translational modification Phosphoserine. Low complexity predominate over residues 205 to 218; the sequence is SVSLSEPKSKSSLH. At T234 the chain carries Phosphothreonine. Residues 245–256 show a composition bias toward acidic residues; the sequence is PDEDDMEGDSFF. Over residues 259-275 the composition is skewed to basic and acidic residues; that stretch reads PIPKPEKTYGLRKEPRK. Residues 286–302 are compositionally biased toward low complexity; that stretch reads APPLKSGLSSLAGAPSL. Residues S301 and S326 each carry the phosphoserine modification. The disordered stretch occupies residues 331-353; sequence TGEDDDYVDDFNSTSHRSEKSEI. Y337 is subject to Phosphotyrosine.

This sequence belongs to the CEP43 family. Homodimer. Part of a ternary complex that contains CEP350, CEP43 and MAPRE1. Interacts directly with CEP350 and MAPRE1. Interacts with CEP19. Interacts (via N-terminus) with CEP350 (via C-terminus). Ubiquitous. Highly expressed in heart, liver, muscle, kidney, intestine, colon, adrenal gland, prostate, testis, and pancreas.

The protein resides in the cytoplasm. The protein localises to the cytoskeleton. Its subcellular location is the microtubule organizing center. It localises to the centrosome. It is found in the centriole. The protein resides in the cilium basal body. Required for anchoring microtubules to the centrosomes. Required for ciliation. The chain is Centrosomal protein 43 from Homo sapiens (Human).